The sequence spans 889 residues: Mixed-linked glucan synthase 2 (889 aa).

A disordered region spans residues 34–53 (AGADGQNGRRSPVAKRVNDG). A run of 2 helical transmembrane segments spans residues 93–113 (ILHP…AFFA) and 123–143 (GVWL…SWVL). Residue aspartate 213 is part of the active site. A coiled-coil region spans residues 265–293 (ELMSDHRRVRREYEEFKVRIDSLSSTIRQ). Positions 411 and 413 each coordinate substrate. Aspartate 579 is a catalytic residue. Helical transmembrane passes span 655–675 (TYPI…MWLI), 685–705 (FGEY…IGMF), 723–743 (FYMI…ALKL), 777–797 (LLIP…VAVG), 811–831 (LAVL…PFAL), and 842–862 (AVLF…YVAF).

It belongs to the glycosyltransferase 2 family. Plant cellulose synthase-like F subfamily.

The protein resides in the golgi apparatus membrane. In terms of biological role, catalyzes both beta-1,3 and beta-1,4 glycosidic linkage on beta-D-glucan. Essential for (1,3;1,4)-beta-D-glucans synthesis in grasses and cereals (Poaceae). The mixed-linked glucans (which are not present in walls of dicotyledons or most other monocotyledonous plants) are particularly important constituents of the walls of the starchy endosperm and aleurone cells of cereal grains such as oats, wheat, rice and barley. They can account for up to 70% by weight of the wall. The sequence is that of Mixed-linked glucan synthase 2 (CSLF2) from Oryza sativa subsp. japonica (Rice).